Consider the following 258-residue polypeptide: Imidazole glycerol phosphate synthase subunit HisF (258 aa).

Active-site residues include Asp12 and Asp131.

This sequence belongs to the HisA/HisF family. As to quaternary structure, heterodimer of HisH and HisF.

Its subcellular location is the cytoplasm. The catalysed reaction is 5-[(5-phospho-1-deoxy-D-ribulos-1-ylimino)methylamino]-1-(5-phospho-beta-D-ribosyl)imidazole-4-carboxamide + L-glutamine = D-erythro-1-(imidazol-4-yl)glycerol 3-phosphate + 5-amino-1-(5-phospho-beta-D-ribosyl)imidazole-4-carboxamide + L-glutamate + H(+). It functions in the pathway amino-acid biosynthesis; L-histidine biosynthesis; L-histidine from 5-phospho-alpha-D-ribose 1-diphosphate: step 5/9. IGPS catalyzes the conversion of PRFAR and glutamine to IGP, AICAR and glutamate. The HisF subunit catalyzes the cyclization activity that produces IGP and AICAR from PRFAR using the ammonia provided by the HisH subunit. This Corynebacterium glutamicum (strain R) protein is Imidazole glycerol phosphate synthase subunit HisF.